We begin with the raw amino-acid sequence, 316 residues long: Cell division protein FtsQ (316 aa).

Residues methionine 1–proline 34 are disordered. The Cytoplasmic portion of the chain corresponds to methionine 1–arginine 61. The chain crosses the membrane as a helical span at residues leucine 62–tryptophan 80. Residues proline 81–isoleucine 316 lie on the Periplasmic side of the membrane. Residues phenylalanine 97–arginine 165 form the POTRA domain. A disordered region spans residues proline 295–isoleucine 316.

Belongs to the FtsQ/DivIB family. FtsQ subfamily.

The protein resides in the cell inner membrane. Its function is as follows. Essential cell division protein. The chain is Cell division protein FtsQ from Zymomonas mobilis subsp. mobilis (strain ATCC 31821 / ZM4 / CP4).